The sequence spans 244 residues: Aspartate/glutamate leucyltransferase (244 aa).

This sequence belongs to the R-transferase family. Bpt subfamily.

It is found in the cytoplasm. It catalyses the reaction N-terminal L-glutamyl-[protein] + L-leucyl-tRNA(Leu) = N-terminal L-leucyl-L-glutamyl-[protein] + tRNA(Leu) + H(+). The catalysed reaction is N-terminal L-aspartyl-[protein] + L-leucyl-tRNA(Leu) = N-terminal L-leucyl-L-aspartyl-[protein] + tRNA(Leu) + H(+). In terms of biological role, functions in the N-end rule pathway of protein degradation where it conjugates Leu from its aminoacyl-tRNA to the N-termini of proteins containing an N-terminal aspartate or glutamate. This Paramagnetospirillum magneticum (strain ATCC 700264 / AMB-1) (Magnetospirillum magneticum) protein is Aspartate/glutamate leucyltransferase.